Here is an 85-residue protein sequence, read N- to C-terminus: Putative membrane protein insertion efficiency factor (85 aa).

Belongs to the UPF0161 family.

The protein resides in the cell inner membrane. Could be involved in insertion of integral membrane proteins into the membrane. The chain is Putative membrane protein insertion efficiency factor from Dictyoglomus thermophilum (strain ATCC 35947 / DSM 3960 / H-6-12).